The sequence spans 74 residues: Brevinin-2Ta (74 aa).

A signal peptide spans 1 to 22; sequence MFTMKKSLLLFFFLGTISLSLC. Residues 23–41 constitute a propeptide that is removed on maturation; that stretch reads QEERNADEDDGEMTEEEKR. An intrachain disulfide couples Cys68 to Cys74.

Belongs to the frog skin active peptide (FSAP) family. Brevinin subfamily. In terms of tissue distribution, expressed by the skin glands.

It is found in the secreted. In terms of biological role, antimicrobial peptide. This is Brevinin-2Ta from Rana temporaria (European common frog).